Here is a 571-residue protein sequence, read N- to C-terminus: Urease subunit alpha (571 aa).

The 440-residue stretch at Gly132–Phe571 folds into the Urease domain. 3 residues coordinate Ni(2+): His137, His139, and Lys220. Lys220 is subject to N6-carboxylysine. Position 222 (His222) interacts with substrate. Ni(2+) is bound by residues His249 and His275. His323 functions as the Proton donor in the catalytic mechanism. Asp363 lines the Ni(2+) pocket.

Belongs to the metallo-dependent hydrolases superfamily. Urease alpha subunit family. In terms of assembly, heterotrimer of UreA (gamma), UreB (beta) and UreC (alpha) subunits. Three heterotrimers associate to form the active enzyme. The cofactor is Ni cation. Carboxylation allows a single lysine to coordinate two nickel ions.

It localises to the cytoplasm. The enzyme catalyses urea + 2 H2O + H(+) = hydrogencarbonate + 2 NH4(+). It functions in the pathway nitrogen metabolism; urea degradation; CO(2) and NH(3) from urea (urease route): step 1/1. This Halalkalibacterium halodurans (strain ATCC BAA-125 / DSM 18197 / FERM 7344 / JCM 9153 / C-125) (Bacillus halodurans) protein is Urease subunit alpha.